A 467-amino-acid polypeptide reads, in one-letter code: uncharacterized protein (467 aa).

Sel1-like repeat units follow at residues 38–73 (PAAA…EQGH), 107–138 (PEAQ…KNNN), 139–172 (PHGQ…AQGL), 173–208 (PEAH…QQGY), 240–275 (PDAH…AERH), 276–311 (PEGL…EAGS), 343–378 (AERL…ELGH), 379–414 (SKAQ…AKKD), and 415–450 (SMAF…NNGY).

This is an uncharacterized protein from Neisseria meningitidis serogroup B (strain ATCC BAA-335 / MC58).